Here is a 311-residue protein sequence, read N- to C-terminus: Protoheme IX farnesyltransferase (311 aa).

Transmembrane regions (helical) follow at residues 32–52 (VMSL…VSIN), 53–73 (PWYG…AGVL), 104–124 (FVFG…FINW), 125–145 (FAAL…TIWL), 153–173 (IVIG…AATG), 180–200 (FLLF…LSLF), 224–244 (KQIL…FIID), 245–265 (FAGI…IYFA), and 290–310 (FYLA…YFII).

Belongs to the UbiA prenyltransferase family. Protoheme IX farnesyltransferase subfamily.

The protein resides in the cell inner membrane. The enzyme catalyses heme b + (2E,6E)-farnesyl diphosphate + H2O = Fe(II)-heme o + diphosphate. It functions in the pathway porphyrin-containing compound metabolism; heme O biosynthesis; heme O from protoheme: step 1/1. In terms of biological role, converts heme B (protoheme IX) to heme O by substitution of the vinyl group on carbon 2 of heme B porphyrin ring with a hydroxyethyl farnesyl side group. The chain is Protoheme IX farnesyltransferase from Bartonella quintana (strain Toulouse) (Rochalimaea quintana).